Here is a 426-residue protein sequence, read N- to C-terminus: 3-isopropylmalate dehydratase large subunit (426 aa).

Cys307, Cys367, and Cys370 together coordinate [4Fe-4S] cluster.

This sequence belongs to the aconitase/IPM isomerase family. LeuC type 2 subfamily. Heterodimer of LeuC and LeuD. It depends on [4Fe-4S] cluster as a cofactor.

It carries out the reaction (2R,3S)-3-isopropylmalate = (2S)-2-isopropylmalate. The protein operates within amino-acid biosynthesis; L-leucine biosynthesis; L-leucine from 3-methyl-2-oxobutanoate: step 2/4. In terms of biological role, catalyzes the isomerization between 2-isopropylmalate and 3-isopropylmalate, via the formation of 2-isopropylmaleate. This Aliarcobacter butzleri (strain RM4018) (Arcobacter butzleri) protein is 3-isopropylmalate dehydratase large subunit.